We begin with the raw amino-acid sequence, 396 residues long: Flavohemoprotein (396 aa).

Residues 1-136 (MLDNQTIATV…LADIFINREE (136 aa)) form the Globin domain. A heme b-binding site is contributed by H85. Active-site charge relay system residues include Y95 and E135. The interval 147–396 (GGWRGLRPFR…YECFGPHKVI (250 aa)) is reductase. Positions 150–255 (RGLRPFRINR…TAPRGDFFLD (106 aa)) constitute an FAD-binding FR-type domain. Residues Y188 and 204–207 (RQYS) each bind FAD. 268 to 273 (GVGLTP) provides a ligand contact to NADP(+). 389 to 392 (CFGP) provides a ligand contact to FAD.

It belongs to the globin family. Two-domain flavohemoproteins subfamily. In the C-terminal section; belongs to the flavoprotein pyridine nucleotide cytochrome reductase family. Heme b is required as a cofactor. The cofactor is FAD.

The enzyme catalyses 2 nitric oxide + NADPH + 2 O2 = 2 nitrate + NADP(+) + H(+). It catalyses the reaction 2 nitric oxide + NADH + 2 O2 = 2 nitrate + NAD(+) + H(+). In terms of biological role, is involved in NO detoxification in an aerobic process, termed nitric oxide dioxygenase (NOD) reaction that utilizes O(2) and NAD(P)H to convert NO to nitrate, which protects the bacterium from various noxious nitrogen compounds. Therefore, plays a central role in the inducible response to nitrosative stress. The chain is Flavohemoprotein from Photorhabdus laumondii subsp. laumondii (strain DSM 15139 / CIP 105565 / TT01) (Photorhabdus luminescens subsp. laumondii).